Consider the following 434-residue polypeptide: D-amino acid dehydrogenase (434 aa).

Val3–Tyr17 lines the FAD pocket.

Belongs to the DadA oxidoreductase family. Requires FAD as cofactor.

It carries out the reaction a D-alpha-amino acid + A + H2O = a 2-oxocarboxylate + AH2 + NH4(+). The protein operates within amino-acid degradation; D-alanine degradation; NH(3) and pyruvate from D-alanine: step 1/1. Functionally, oxidative deamination of D-amino acids. In Pseudomonas entomophila (strain L48), this protein is D-amino acid dehydrogenase.